The primary structure comprises 390 residues: 3-ketoacyl-CoA thiolase (390 aa).

C95 functions as the Acyl-thioester intermediate in the catalytic mechanism. Residues H346 and C376 each act as proton acceptor in the active site.

This sequence belongs to the thiolase-like superfamily. Thiolase family. As to quaternary structure, heterotetramer of two alpha chains (FadB) and two beta chains (FadA).

The protein localises to the cytoplasm. It catalyses the reaction an acyl-CoA + acetyl-CoA = a 3-oxoacyl-CoA + CoA. Its pathway is lipid metabolism; fatty acid beta-oxidation. Functionally, catalyzes the final step of fatty acid oxidation in which acetyl-CoA is released and the CoA ester of a fatty acid two carbons shorter is formed. The protein is 3-ketoacyl-CoA thiolase of Psychrobacter arcticus (strain DSM 17307 / VKM B-2377 / 273-4).